The following is a 185-amino-acid chain: Flavodoxin (185 aa).

One can recognise a Flavodoxin-like domain in the interval 4-159; it reads VLVIYDTRTG…ACRRLGRRLA (156 aa).

The protein belongs to the flavodoxin family. The cofactor is FMN.

Its function is as follows. Low-potential electron donor to a number of redox enzymes. This is Flavodoxin (fldA) from Aquifex aeolicus (strain VF5).